A 265-amino-acid polypeptide reads, in one-letter code: Di-trans,poly-cis-undecaprenyl-diphosphate synthase (265 aa).

The short motif at 236 to 238 is the RXG motif; crucial for prenyltransferase activity element; sequence RFG.

This sequence belongs to the UPP synthase family. Mg(2+) serves as cofactor.

It carries out the reaction 8 isopentenyl diphosphate + (2E,6E)-farnesyl diphosphate = di-trans,octa-cis-undecaprenyl diphosphate + 8 diphosphate. It participates in protein modification; protein glycosylation. It functions in the pathway lipid metabolism. Its function is as follows. Cis-prenyl transferase involved in the synthesis of dolichol, a long-chain polyprenol that is utilized as a sugar carrier in protein glycosylation in the endoplasmic reticulum (ER). Catalyzes the sequential condensation of isopentenyl pyrophosphate (IPP) with farnesyl pyrophosphate (FPP) to produce a polyprenyl pyrophosphate which contains 11 (major) and 12 (minor) isoprene units. The protein is Di-trans,poly-cis-undecaprenyl-diphosphate synthase of Giardia intestinalis (strain ATCC 50803 / WB clone C6) (Giardia lamblia).